We begin with the raw amino-acid sequence, 179 residues long: MSRVGKLPITIPKGVDVSLDEPLLTIKGPKGTLARRMPGDVEVHLEQGAVLIRRKDESNKSRSLHGLVRALVNNMVHGVSEGFVISLEIQGTGYRADAQNNVLNLSLGYSHPIQFVLPEGIKGAVDRNTIRLEGIDKELLGQTAARIRALRPAEPYKGKGIRYAGEHIHRKVGKTGSKK.

Belongs to the universal ribosomal protein uL6 family. Part of the 50S ribosomal subunit.

Its function is as follows. This protein binds to the 23S rRNA, and is important in its secondary structure. It is located near the subunit interface in the base of the L7/L12 stalk, and near the tRNA binding site of the peptidyltransferase center. The chain is Large ribosomal subunit protein uL6 from Syntrophobacter fumaroxidans (strain DSM 10017 / MPOB).